Here is a 476-residue protein sequence, read N- to C-terminus: MTLLRHLLTATALLGASVQAAQGVTGSPFGFASGTTGGGDATPAAPSDISQLKTWLSDSTPRVILIDKEFNFLGSEGKCTNCECCKPASNTCGSSGQNAVKQNGSDWCGSYPTLTCTYDNAGIEGLEVASNKSIVGVGSSGVLRGKGLRLVNGVSNIIIQNIHITELNPEFIWGGDAITLDGTNNVWIDHVKINLIGRQMFVAGYEASHSVTISNSEFDGETSWSATCDGHHYWTVLGYGHNDKITFANNYIHHTSGRSPKLEFNSFWHAYNNYWYNNTGHAFDVGKNTRALIEGNVMVQVDTPLLADSNPGAVFAVNTSDVSTCTSTLGRTCVPNTLISSGTLSGSDSSVISSWPSGESDVTVMAASKVASYVKANAGIGKLGNGSGSSSTVGAAATSAVAKRADSDDAPFVPAYSEAGPGASAVPTQPSWSWRTVTNGPAPTGAPSDSPSAPQGLGAPVQASNKHHHQGHGRGY.

The N-terminal stretch at 1–20 (MTLLRHLLTATALLGASVQA) is a signal peptide. Cysteine 84 and cysteine 108 are disulfide-bonded. N-linked (GlcNAc...) asparagine glycans are attached at residues asparagine 103 and asparagine 131. Arginine 258 is a catalytic residue. N-linked (GlcNAc...) asparagine glycans are attached at residues asparagine 277 and asparagine 318. A disulfide bond links cysteine 325 and cysteine 333. A glycan (N-linked (GlcNAc...) asparagine) is linked at asparagine 385. The tract at residues 412 to 476 (FVPAYSEAGP…HHHQGHGRGY (65 aa)) is disordered. Residues 426 to 453 (VPTQPSWSWRTVTNGPAPTGAPSDSPSA) are compositionally biased toward polar residues. Over residues 465-476 (NKHHHQGHGRGY) the composition is skewed to basic residues.

Belongs to the polysaccharide lyase 1 family.

Its subcellular location is the secreted. The catalysed reaction is Eliminative cleavage of (1-&gt;4)-alpha-D-galacturonan methyl ester to give oligosaccharides with 4-deoxy-6-O-methyl-alpha-D-galact-4-enuronosyl groups at their non-reducing ends.. Pectinolytic enzymes consist of four classes of enzymes: pectin lyase, polygalacturonase, pectin methylesterase and rhamnogalacturonase. Among pectinolytic enzymes, pectin lyase is the most important in depolymerization of pectin, since it cleaves internal glycosidic bonds of highly methylated pectins. This chain is Probable pectin lyase F (pelF), found in Aspergillus niger (strain ATCC MYA-4892 / CBS 513.88 / FGSC A1513).